Reading from the N-terminus, the 402-residue chain is MEKLTIRDIDLKGKRVIMRVDFNVPMKDGEITDDTRIVEALPTIKYAIENGAIVILLSHLGRPKGERKPEFSLLPVAKRLSELLGKEVTFIPELYGEIVNEKVKNAKEGDVILLENTRFDKGETKNDPELAKKWAELADIHVNDAFGTAHRAHASNVGIAQYIPSVAGFLMEKEIKFLSKATTNPEKPYVVVLGGAKVSDKIGVITNLLDKADKILIGGAMMFTFLKSLGYNVGSSLVEDDKLDLAKRILEQAKEKGTEIVLPVDTVCAQKIEAGVETKTIDIKDGLPEGWMGLDIGPKTVELFRNSISGAKTIVWNGPMGVFEIEDFSNGTKEVAIAIAEETSKGATTIIGGGDSAAAIAKFGLKDKVSHVSTGGGASLEFLEGKELPGIASIANKKKIEN.

Substrate-binding positions include 21-23, arginine 36, 59-62, arginine 118, and arginine 151; these read DFN and HLGR. ATP is bound by residues lysine 201, glycine 293, glutamate 324, and 353-356; that span reads GGDS.

It belongs to the phosphoglycerate kinase family. In terms of assembly, monomer.

The protein localises to the cytoplasm. The catalysed reaction is (2R)-3-phosphoglycerate + ATP = (2R)-3-phospho-glyceroyl phosphate + ADP. It participates in carbohydrate degradation; glycolysis; pyruvate from D-glyceraldehyde 3-phosphate: step 2/5. The protein is Phosphoglycerate kinase of Thermosipho africanus (strain TCF52B).